The sequence spans 217 residues: MATVEPETTPTPNPPTTEEEKTESNQEVANPEHYIKHPLQNRWALWFFKNDKSKTWQANLRLISKFDTVEDFWALYNHIQLSSNLMPGCDYSLFKDGIEPMWEDEKNKRGGRWLITLNKQQRRSDLDRFWLETLLCLIGESFDDYSDDVCGAVVNVRAKGDKIAIWTTECENREAVTHIGRVYKERLGLPPKIVIGYQSHADTATKSGSTTKNRFVV.

The tract at residues 1–30 is disordered; sequence MATVEPETTPTPNPPTTEEEKTESNQEVAN. Ala2 bears the N-acetylalanine mark. Thr22 bears the Phosphothreonine mark. The tract at residues 37 to 40 is EIF4EBP1/2/3 binding; that stretch reads HPLQ. 56-57 is a binding site for mRNA; that stretch reads WQ. The EIF4EBP1/2/3 binding stretch occupies residues 73–77; that stretch reads WALYN. 102–103 contributes to the mRNA binding site; sequence WE. The interval 132–139 is EIF4EBP1/2/3 binding; sequence ETLLCLIG. Residues 157–162 and 205–207 each bind mRNA; these read RAKGDK and TKS. Ser209 is modified (phosphoserine; by PKC and MKNK2).

The protein belongs to the eukaryotic initiation factor 4E family. EIF4F is a multi-subunit complex, the composition of which varies with external and internal environmental conditions. It is composed of at least EIF4A, EIF4E and EIF4G1/EIF4G3. EIF4E is also known to interact with other partners. Interacts with EIF4ENIF1/4E-T; promotes recruitment to P-bodies and import into the nucleus. Hypophosphorylated EIF4EBP1, EIF4EBP2 and EIF4EBP3 compete with EIF4G1/EIF4G3 to interact with EIF4E; insulin stimulated MAP-kinase (MAPK1 and MAPK3) phosphorylation of EIF4EBP1 causes dissociation of the complex allowing EIF4G1/EIF4G3 to bind and consequent initiation of translation. Interacts mutually exclusive with EIF4A1 or EIF4A2. Interacts with NGDN and PIWIL2. Component of the CYFIP1-EIF4E-FMR1 complex composed of CYFIP, EIF4E and FMR1. Interacts directly with CYFIP1. Interacts with CLOCK. Binds to MKNK2 in nucleus. Interacts with LIMD1, WTIP and AJUBA. Interacts with APOBEC3G in an RNA-dependent manner. Interacts with LARP1. Interacts with METTL3. Interacts with RBM24; this interaction prevents EIF4E from binding to p53/TP53 mRNA and inhibits the assembly of translation initiation complex. Interacts with DDX3X; interaction is direct and in an RNA-independent manner; this interaction enhances EIF4E cap-binding ability and is required for the repression of cap-dependent translation and the increase of IRES-mediated translation. DDX3X competes with EIF4G1 for interaction with EIF4E. Interacts with EIF4G1; which in a mutual exclusive interaction associates either with EIF1 or with EIF4E on a common binding site. Interacts with BTG4 and CNOT7. Interacts with LRPPRC (via N-terminus); the interaction promotes association of EIF4E with 4ESE-containing mRNAs. Interacts with mRNA cleavage enzyme CPSF3 and its cofactor CPSF1. Interacts (via RING-type zinc finger) with PML; the interaction results in conformational changes of both interacting proteins and reduces EIF4E affinity for the 5' m7G cap of mRNA, thus reducing EIF4E-mediated mRNA nuclear export. Interacts with homeobox protein HHEX/PRH; the interaction inhibits EIF4E-mediated mRNA nuclear export. Interacts with homeobox protein HOXA9; the interaction positively regulates EIF4E-mediated mRNA nuclear export. Interacts with homeobox protein EMX2. In terms of assembly, (Microbial infection) Interacts with Lassa virus Z protein. As to quaternary structure, (Microbial infection) Interacts with Lymphocytic choriomeningitis virus (LCMV) Z protein (via RING-type zinc finger); the interaction results in conformational changes of both interacting proteins and reduces EIF4E affinity for the m7G mRNA cap structure. (Microbial infection) Interacts (via cap-binding region) with potato virus Y VPg; this interaction mediates the translation of the VPg-viral RNA conjugates and interferes with the cellular EIF4E-dependent mRNA export and translation. In terms of processing, phosphorylation increases the ability of the protein to bind to mRNA caps and to form the eIF4F complex. Phosphorylation also enhances its mRNA transport function. Phosphorylation at Ser-209 is not essential for protein synthesis.

The protein localises to the cytoplasm. The protein resides in the P-body. It localises to the stress granule. Its subcellular location is the nucleus. It is found in the nucleus speckle. The protein localises to the nuclear body. Its function is as follows. Acts in the cytoplasm to initiate and regulate protein synthesis and is required in the nucleus for export of a subset of mRNAs from the nucleus to the cytoplasm which promotes processes such as RNA capping, processing and splicing. Component of the protein complex eIF4F, which is involved in the recognition of the mRNA cap, ATP-dependent unwinding of 5'-terminal secondary structure and recruitment of mRNA to the ribosome. This protein recognizes and binds the 7-methylguanosine (m7G)-containing mRNA cap during an early step in the initiation of protein synthesis and facilitates ribosome binding by inducing the unwinding of the mRNAs secondary structures. Together with EIF4G1, antagonizes the scanning promoted by EIF1-EIF4G1 and is required for TISU translation, a process where the TISU element recognition makes scanning unnecessary. In addition to its role in translation initiation, also acts as a regulator of translation and stability in the cytoplasm. Component of the CYFIP1-EIF4E-FMR1 complex which binds to the mRNA cap and mediates translational repression: in the complex, EIF4E mediates the binding to the mRNA cap. Component of a multiprotein complex that sequesters and represses translation of proneurogenic factors during neurogenesis. In P-bodies, component of a complex that mediates the storage of translationally inactive mRNAs in the cytoplasm and prevents their degradation. May play an important role in spermatogenesis through translational regulation of stage-specific mRNAs during germ cell development. As well as its roles in translation, also involved in mRNA nucleocytoplasmic transport. Its role in mRNA export from the nucleus to the cytoplasm relies on its ability to bind the m7G cap of RNAs and on the presence of the 50-nucleotide EIF4E sensitivity element (4ESE) in the 3'UTR of sensitive transcripts. Interaction with the 4ESE is mediated by LRPPRC which binds simultaneously to both EIF4E and the 4ESE, thereby acting as a platform for assembly for the RNA export complex. EIF4E-dependent mRNA export is independent of ongoing protein or RNA synthesis and is also NFX1-independent but is XPO1-dependent with LRPPRC interacting with XPO1 to form an EIF4E-dependent mRNA export complex. Alters the composition of the cytoplasmic face of the nuclear pore to promote RNA export by reducing RANBP2 expression, relocalizing nucleoporin NUP214 and increasing expression of RANBP1 and RNA export factors DDX19 and GLE1. Promotes the nuclear export of cyclin CCND1 mRNA. Promotes the nuclear export of NOS2/iNOS mRNA. Promotes the nuclear export of MDM2 mRNA. Promotes the export of additional mRNAs, including others involved in the cell cycle. In the nucleus, binds to capped splice factor-encoding mRNAs and stimulates their nuclear export to enhance splice factor production by increasing their cytoplasmic availability to the translation machinery. May also regulate splicing through interaction with the spliceosome in an RNA and m7G cap-dependent manner. Also binds to some pre-mRNAs and may play a role in their recruitment to the spliceosome. Promotes steady-state capping of a subset of coding and non-coding RNAs by mediating nuclear export of capping machinery mRNAs including RNMT, RNGTT and RAMAC to enhance their translation. Stimulates mRNA 3'-end processing by promoting the expression of several core cleavage complex factors required for mRNA cleavage and polyadenylation, and may also have a direct effect through its interaction with the CPSF3 cleavage enzyme. Rescues cells from apoptosis by promoting activation of serine/threonine-protein kinase AKT1 through mRNA export of NBS1 which potentiates AKT1 phosphorylation and also through mRNA export of AKT1 effectors, allowing for increased production of these proteins. The polypeptide is Eukaryotic translation initiation factor 4E (Homo sapiens (Human)).